A 228-amino-acid polypeptide reads, in one-letter code: Demethylmenaquinone methyltransferase (228 aa).

S-adenosyl-L-methionine contacts are provided by residues Thr-62, Asp-80, 100–101, and Ser-117; that span reads DA.

It belongs to the class I-like SAM-binding methyltransferase superfamily. MenG/UbiE family.

The catalysed reaction is a 2-demethylmenaquinol + S-adenosyl-L-methionine = a menaquinol + S-adenosyl-L-homocysteine + H(+). The protein operates within quinol/quinone metabolism; menaquinone biosynthesis; menaquinol from 1,4-dihydroxy-2-naphthoate: step 2/2. Methyltransferase required for the conversion of demethylmenaquinol (DMKH2) to menaquinol (MKH2). The sequence is that of Demethylmenaquinone methyltransferase from Mycolicibacterium vanbaalenii (strain DSM 7251 / JCM 13017 / BCRC 16820 / KCTC 9966 / NRRL B-24157 / PYR-1) (Mycobacterium vanbaalenii).